We begin with the raw amino-acid sequence, 715 residues long: Harpin secretion protein HrpI (715 aa).

A run of 7 helical transmembrane segments spans residues 23–43, 45–65, 69–89, 115–135, 203–223, 241–261, and 298–318; these read GAAI…TGLI, VLIA…MYLP, AFST…ALSI, GNLA…FLVI, AIAG…IGVL, IGDG…AGMI, and MLGF…ISAI.

The protein belongs to the FHIPEP (flagella/HR/invasion proteins export pore) family.

The protein resides in the cell inner membrane. Functionally, involved in the secretion of harpin; a proteinaceous elicitor of the hypersensitivity response in plants. The protein is Harpin secretion protein HrpI (hrpI) of Erwinia amylovora (Fire blight bacteria).